The chain runs to 478 residues: Sugar transporter ERD6-like 18 (478 aa).

Helical transmembrane passes span 31-51 (ITAC…SFGV), 71-91 (IAQF…GALF), 110-130 (LLCI…WLNF), 133-153 (ISSG…IAEI), 162-180 (FTFT…VYFS), 188-208 (ILAL…FFVP), 270-290 (TLVV…SAVL), 306-326 (IGST…VILV), 333-353 (PLLL…GVAF), 367-387 (VFTF…LGGL), 407-427 (IVTL…NFLL), and 433-453 (GTFY…WLLV).

The protein belongs to the major facilitator superfamily. Sugar transporter (TC 2.A.1.1) family. As to expression, expressed in leaf vasculature, stem and flowers.

The protein localises to the membrane. In terms of biological role, sugar transporter. The sequence is that of Sugar transporter ERD6-like 18 (SFP2) from Arabidopsis thaliana (Mouse-ear cress).